The chain runs to 85 residues: Large ribosomal subunit protein bL27 (85 aa).

The tract at residues 1-22 (MAHKKAGGSSRNGRDSHSKRLG) is disordered.

This sequence belongs to the bacterial ribosomal protein bL27 family.

This is Large ribosomal subunit protein bL27 from Nitrosomonas europaea (strain ATCC 19718 / CIP 103999 / KCTC 2705 / NBRC 14298).